Consider the following 217-residue polypeptide: Uracil-DNA glycosylase (217 aa).

Asp62 functions as the Proton acceptor in the catalytic mechanism.

This sequence belongs to the uracil-DNA glycosylase (UDG) superfamily. UNG family.

It is found in the cytoplasm. It catalyses the reaction Hydrolyzes single-stranded DNA or mismatched double-stranded DNA and polynucleotides, releasing free uracil.. Functionally, excises uracil residues from the DNA which can arise as a result of misincorporation of dUMP residues by DNA polymerase or due to deamination of cytosine. This chain is Uracil-DNA glycosylase, found in Streptococcus suis (strain 98HAH33).